Reading from the N-terminus, the 617-residue chain is Serine/threonine-protein kinase par-4 (617 aa).

Residues 1-11 (MDAPSTSSGAQ) are compositionally biased toward polar residues. Residues 1–59 (MDAPSTSSGAQSKLLMPGDDEADEDHQNRGDPNLQQKQKIQLNVDPDYDDDEDDDCFID) form a disordered region. A compositionally biased stretch (acidic residues) spans 46–57 (PDYDDDEDDDCF). A Protein kinase domain is found at 183–446 (YMWGGQIGTG…CLETMIHPWF (264 aa)). ATP-binding positions include 189–197 (IGTGSYGKV) and lysine 212. Aspartate 310 functions as the Proton acceptor in the catalytic mechanism. Positions 523 to 617 (LEAKPGDGPD…CIFRSRTDSA (95 aa)) are disordered. The span at 587–597 (DPPPTAAPGAP) shows a compositional bias: pro residues.

It belongs to the protein kinase superfamily. CAMK Ser/Thr protein kinase family. LKB1 subfamily. In terms of assembly, interacts with strd-1. The cofactor is Mg(2+). It depends on Mn(2+) as a cofactor. As to expression, expressed in the gonads, oocytes and early embryos (at protein level).

The protein localises to the cytoplasm. Its subcellular location is the cell cortex. The enzyme catalyses L-seryl-[protein] + ATP = O-phospho-L-seryl-[protein] + ADP + H(+). The catalysed reaction is L-threonyl-[protein] + ATP = O-phospho-L-threonyl-[protein] + ADP + H(+). In terms of biological role, required for cytoplasmic partitioning and asymmetric cell division in early embryogenesis. Controls the asymmetric cell division of the Q.p neuroblast lineage. Involved in mediating cell polarization via regulation of anillin family scaffold proteins. Phosphorylates and restricts the asymmetry effectors mex-5 and mex-6 to the anterior cytoplasm of the zygote and maintains these phosphorylations until fertilization. May phosphorylate par-1. Required for strd-1 localization to the cell cortex of early embryos and may be required for strd-1 protein stabilization. May regulate the integrity of the early embryonic cortex in a strd-1-dependent manner. Phosphorylates and regulates aak-2 in response to oxidative stress and during dauer development. May also play a role in motility, behavioral response, regulation of lifespan and dauer formation through this pathway. Required to establish germline stem cell (GSC) quiescence during dauer development. Acts downstream of unc-40 in dendrite outgrowth. May play a role in cell shedding during embryogenesis, probably by phosphorylating pig-1. This Caenorhabditis elegans protein is Serine/threonine-protein kinase par-4 (par-4).